We begin with the raw amino-acid sequence, 184 residues long: FMRFamide-related peptides (184 aa).

Residues 1-44 (MLVSSSVLKDDSSLRIFKESPNEFEYIIKRHDMDDRKEDTESKE) constitute a propeptide that is removed on maturation. A Phenylalanine amide modification is found at F56. Residues 59–83 (GQSFFNNLDNSAFDNEIDSKVSRHP) constitute a propeptide that is removed on maturation. Phenylalanine amide is present on F94. Residues 97–107 (SGMKSTNDEQP) constitute a propeptide that is removed on maturation. F119 bears the Phenylalanine amide mark. Positions 122 to 184 (NIQIVPTDFD…SLETNSNHRE (63 aa)) are excised as a propeptide.

Belongs to the FARP (FMRFamide related peptide) family. Expressed throughout the central nervous system.

It is found in the secreted. In terms of biological role, in insects, FMRFamide and related peptides have modulatory actions at skeletal neuromuscular junctions, and peptides that are immunologically related to FMRFamide are released into the circulation from neurohemal organs. The protein is FMRFamide-related peptides of Camponotus floridanus (Florida carpenter ant).